Here is a 494-residue protein sequence, read N- to C-terminus: 2,3-bisphosphoglycerate-independent phosphoglycerate mutase (494 aa).

Mn(2+) is bound by residues Asp-12 and Ser-62. The active-site Phosphoserine intermediate is the Ser-62. Substrate-binding positions include His-121, 150–151, Arg-181, Arg-187, 252–255, and Lys-317; these read RD and RSDR. Mn(2+)-binding residues include Asp-384, His-388, Asp-425, His-426, and His-443.

Belongs to the BPG-independent phosphoglycerate mutase family. In terms of assembly, monomer. Requires Mn(2+) as cofactor.

The catalysed reaction is (2R)-2-phosphoglycerate = (2R)-3-phosphoglycerate. It participates in carbohydrate degradation; glycolysis; pyruvate from D-glyceraldehyde 3-phosphate: step 3/5. Catalyzes the interconversion of 2-phosphoglycerate and 3-phosphoglycerate. In Anaplasma marginale (strain St. Maries), this protein is 2,3-bisphosphoglycerate-independent phosphoglycerate mutase.